Reading from the N-terminus, the 263-residue chain is Translation initiation factor 2 subunit alpha (263 aa).

The region spanning G12–K83 is the S1 motif domain.

It belongs to the eIF-2-alpha family. In terms of assembly, heterotrimer composed of an alpha, a beta and a gamma chain.

Its function is as follows. eIF-2 functions in the early steps of protein synthesis by forming a ternary complex with GTP and initiator tRNA. In Sulfurisphaera tokodaii (strain DSM 16993 / JCM 10545 / NBRC 100140 / 7) (Sulfolobus tokodaii), this protein is Translation initiation factor 2 subunit alpha.